The chain runs to 381 residues: Succinyl-diaminopimelate desuccinylase 1 (381 aa).

H70 is a Zn(2+) binding site. The active site involves D72. Zn(2+) is bound at residue D103. E136 acts as the Proton acceptor in catalysis. Zn(2+)-binding residues include E137, E165, and H354.

Belongs to the peptidase M20A family. DapE subfamily. In terms of assembly, homodimer. Requires Zn(2+) as cofactor. Co(2+) is required as a cofactor.

It carries out the reaction N-succinyl-(2S,6S)-2,6-diaminopimelate + H2O = (2S,6S)-2,6-diaminopimelate + succinate. Its pathway is amino-acid biosynthesis; L-lysine biosynthesis via DAP pathway; LL-2,6-diaminopimelate from (S)-tetrahydrodipicolinate (succinylase route): step 3/3. In terms of biological role, catalyzes the hydrolysis of N-succinyl-L,L-diaminopimelic acid (SDAP), forming succinate and LL-2,6-diaminopimelate (DAP), an intermediate involved in the bacterial biosynthesis of lysine and meso-diaminopimelic acid, an essential component of bacterial cell walls. This Ruegeria sp. (strain TM1040) (Silicibacter sp.) protein is Succinyl-diaminopimelate desuccinylase 1.